Consider the following 238-residue polypeptide: Protein CPn_0658/CP_0089/CPj0658/CpB0684 (238 aa).

This sequence belongs to the chlamydial CPn_0658/CT_538/TC_0825 family.

The sequence is that of Protein CPn_0658/CP_0089/CPj0658/CpB0684 from Chlamydia pneumoniae (Chlamydophila pneumoniae).